A 77-amino-acid chain; its full sequence is Probable Vpr-like protein (77 aa).

Residues 34-42 carry the Nuclear export signal motif; the sequence is LIRLLQGLL. The short motif at 44 to 53 is the Nuclear localization signal element; sequence RLRFRKPKSK.

The protein localises to the virion. Its subcellular location is the host nucleus. In terms of biological role, seems to function as a Vpr-like protein, since it mediates host cell cycle arrest in G2 phase. Cell cycle arrest creates a favorable environment for maximizing viral expression and production. In Felidae (cat family), this protein is Probable Vpr-like protein.